The chain runs to 446 residues: Glycine--tRNA ligase (446 aa).

Positions 100 and 158 each coordinate substrate. ATP is bound by residues 190 to 192 (RNE), 200 to 205 (FRTREF), 275 to 276 (EL), and 319 to 322 (GIER). Residue 205 to 209 (FEQFE) participates in substrate binding. Substrate is bound at residue 315 to 319 (EPAVG).

The protein belongs to the class-II aminoacyl-tRNA synthetase family. In terms of assembly, homodimer.

The protein resides in the cytoplasm. The catalysed reaction is tRNA(Gly) + glycine + ATP = glycyl-tRNA(Gly) + AMP + diphosphate. Functionally, catalyzes the attachment of glycine to tRNA(Gly). This chain is Glycine--tRNA ligase, found in Mycoplasma genitalium (strain ATCC 33530 / DSM 19775 / NCTC 10195 / G37) (Mycoplasmoides genitalium).